Reading from the N-terminus, the 391-residue chain is FLUCTUATING-LIGHT-ACCLIMATION protein 1, chloroplastic (391 aa).

The transit peptide at 1-48 (MASSSTFLELTPFQWNQPLPYTQRPHHRTVLLYSKPQRRSNSIRLQIS) directs the protein to the chloroplast. Residues 87–107 (AIAAVLLGLLLFYDPNSALAA) traverse the membrane as a helical segment. A compositionally biased stretch (low complexity) spans 116–138 (SFSSRSRSSSSSSSQSYSVPRTS). Residues 116–140 (SFSSRSRSSSSSSSQSYSVPRTSNP) are disordered. Helical transmembrane passes span 168-188 (FGFG…AFVL) and 321-341 (YIVV…PING).

It belongs to the FLAP family.

It is found in the plastid. Its subcellular location is the chloroplast thylakoid membrane. It localises to the chloroplast membrane. The protein localises to the chloroplast envelope. Functionally, monitors proton H(+) homeostasis in chloroplasts to manipulate luminal acidification levels appropriately to balance photoprotection and photochemical processes. Required during acclimation response to fluctuating light (e.g. photosynthetic activity optimization) by controlling non-photochemical quenching (NPQ); acts independently from DLDG1. This is FLUCTUATING-LIGHT-ACCLIMATION protein 1, chloroplastic from Arabidopsis thaliana (Mouse-ear cress).